Reading from the N-terminus, the 621-residue chain is Chaperone protein DnaK (621 aa).

The residue at position 175 (Thr-175) is a Phosphothreonine; by autocatalysis. Basic and acidic residues predominate over residues 499–516; the sequence is EAHEADDKKRKEDAETRN. Disordered stretches follow at residues 499–520 and 583–621; these read EAHE…NAEN and AQQG…KDNK. A compositionally biased stretch (low complexity) spans 583-602; sequence AQQGAEGAAGAADSGSANNG. A compositionally biased stretch (acidic residues) spans 603-621; the sequence is GDDDVVDAEVVDDDDKDNK.

It belongs to the heat shock protein 70 family.

In terms of biological role, acts as a chaperone. The sequence is that of Chaperone protein DnaK from Bifidobacterium animalis subsp. lactis (strain AD011).